A 477-amino-acid chain; its full sequence is Argininosuccinate lyase (477 aa).

The segment covering 1–18 (MTTSSHSSEQPTSTQTSG) has biased composition (polar residues). A disordered region spans residues 1–21 (MTTSSHSSEQPTSTQTSGMWG).

The protein belongs to the lyase 1 family. Argininosuccinate lyase subfamily.

The protein resides in the cytoplasm. The enzyme catalyses 2-(N(omega)-L-arginino)succinate = fumarate + L-arginine. It participates in amino-acid biosynthesis; L-arginine biosynthesis; L-arginine from L-ornithine and carbamoyl phosphate: step 3/3. The sequence is that of Argininosuccinate lyase from Acinetobacter baylyi (strain ATCC 33305 / BD413 / ADP1).